Reading from the N-terminus, the 373-residue chain is tRNA-specific 2-thiouridylase MnmA (373 aa).

ATP contacts are provided by residues 12 to 19 and M38; that span reads GMSGGVDS. The interaction with target base in tRNA stretch occupies residues 98–100; it reads NPD. The active-site Nucleophile is the C103. The cysteines at positions 103 and 200 are disulfide-linked. G128 lines the ATP pocket. Residues 150 to 152 form an interaction with tRNA region; the sequence is KDQ. C200 (cysteine persulfide intermediate) is an active-site residue. The interaction with tRNA stretch occupies residues 312 to 313; sequence RY.

This sequence belongs to the MnmA/TRMU family. As to quaternary structure, interacts with TusE.

It localises to the cytoplasm. The catalysed reaction is S-sulfanyl-L-cysteinyl-[protein] + uridine(34) in tRNA + AH2 + ATP = 2-thiouridine(34) in tRNA + L-cysteinyl-[protein] + A + AMP + diphosphate + H(+). Its function is as follows. Catalyzes the 2-thiolation of uridine at the wobble position (U34) of tRNA(Lys), tRNA(Glu) and tRNA(Gln), leading to the formation of s(2)U34, the first step of tRNA-mnm(5)s(2)U34 synthesis. Sulfur is provided by IscS, via a sulfur-relay system. Binds ATP and its substrate tRNAs. This Yersinia enterocolitica serotype O:8 / biotype 1B (strain NCTC 13174 / 8081) protein is tRNA-specific 2-thiouridylase MnmA.